The chain runs to 310 residues: B3 domain-containing transcription factor NGA1 (310 aa).

The tract at residues 1-26 (MMTDLSLTRDEDEEEAKPLAEEEGAR) is disordered. Residues 16 to 26 (AKPLAEEEGAR) are compositionally biased toward basic and acidic residues. Positions 35-141 (FDKVVTPSDV…RLFIDWRRRP (107 aa)) form a DNA-binding region, TF-B3. Residues 251 to 268 (ESGMTNSTEEESSSSGGS) are compositionally biased toward low complexity. Positions 251–310 (ESGMTNSTEEESSSSGGSLPRGGGGGASSSSFFQLRLGSSSEDDHFTKKGKSSLSFDLDQ) are disordered.

As to quaternary structure, interacts with BRX. Interacts with BZIP30.

Its subcellular location is the nucleus. Functionally, regulates lateral organ growth. Functionally redundant with NGA2, NGA3 and NGA4. The protein is B3 domain-containing transcription factor NGA1 (NGA1) of Arabidopsis thaliana (Mouse-ear cress).